The primary structure comprises 398 residues: 1-deoxy-D-xylulose 5-phosphate reductoisomerase (398 aa).

7 residues coordinate NADPH: Thr-11, Gly-12, Ser-13, Ile-14, Arg-38, Asn-39, and Asn-125. Lys-126 is a 1-deoxy-D-xylulose 5-phosphate binding site. Glu-127 is a binding site for NADPH. Asp-151 contributes to the Mn(2+) binding site. Ser-152, Glu-153, Ser-179, and His-202 together coordinate 1-deoxy-D-xylulose 5-phosphate. Glu-153 contributes to the Mn(2+) binding site. Position 208 (Gly-208) interacts with NADPH. 1-deoxy-D-xylulose 5-phosphate is bound by residues Ser-215, Asn-220, Lys-221, and Glu-224. Glu-224 contacts Mn(2+).

The protein belongs to the DXR family. Requires Mg(2+) as cofactor. Mn(2+) serves as cofactor.

It catalyses the reaction 2-C-methyl-D-erythritol 4-phosphate + NADP(+) = 1-deoxy-D-xylulose 5-phosphate + NADPH + H(+). Its pathway is isoprenoid biosynthesis; isopentenyl diphosphate biosynthesis via DXP pathway; isopentenyl diphosphate from 1-deoxy-D-xylulose 5-phosphate: step 1/6. In terms of biological role, catalyzes the NADPH-dependent rearrangement and reduction of 1-deoxy-D-xylulose-5-phosphate (DXP) to 2-C-methyl-D-erythritol 4-phosphate (MEP). This Burkholderia multivorans (strain ATCC 17616 / 249) protein is 1-deoxy-D-xylulose 5-phosphate reductoisomerase.